The primary structure comprises 128 residues: Large ribosomal subunit protein bL12 (128 aa).

It belongs to the bacterial ribosomal protein bL12 family. Homodimer. Part of the ribosomal stalk of the 50S ribosomal subunit. Forms a multimeric L10(L12)X complex, where L10 forms an elongated spine to which 2 to 4 L12 dimers bind in a sequential fashion. Binds GTP-bound translation factors.

Its function is as follows. Forms part of the ribosomal stalk which helps the ribosome interact with GTP-bound translation factors. Is thus essential for accurate translation. In Corynebacterium glutamicum (strain R), this protein is Large ribosomal subunit protein bL12.